A 1040-amino-acid chain; its full sequence is MQVLPPGSTGGPSRLFILRPVATTLLMAAMLLAGIIGYRFLPVAALPEVDYPTIQVVTLYPGASPDVMTSAVTAPLERQFGQMSGLKQMSSQSSGGASVVTLQFQLTLPLDVAEQEVQAAINAATNLLPSDLPNPPIYSKVNPADPPIMTLAVTSNAVPMTQVEGMVETRVAQKISQVSGVGLVTLAGGQRPAVRVKLNAQAIAALGLTSETIRTAITGANVNSAKGSLDGPERAVTLSANDQMQSADEYRRLIIAYKNGAPVRLGDVATVEQGAENSWLGAWANKAPAIVMNVQRQPGANIIATADSIRQMLPQLTESLPKSVKVTVLSDRTTNIRASVRDTQFELMLAIALVVMIIYLFLRNIPATIIPGVAVPLSLIGTFAVMVFLDFSINNLTLMALTIATGFVVDDAIVVIENISRYIEKGEKPLAAALKGAGEIGFTIISLTFSLIAVLIPLLFMGDIVGRLFREFAVTLAVAILISAVVSLTLTPMMCARMLSQQSLRKQNRFSRACERLFDRVIASYGRGLAKVLNHPWLTLSVAFATLLLSVMLWIVIPKGFFPVQDNGIIQGTLQAPQSSSYASMAQRQHQVAERILQDPAVQSLTTFVGVDGANPTLNSARLQINLKSLDERDDRVQQVISRLQTAVATIPGVALYLQPTQDLTIDTQVSRTQYQFTLRATTLDALSHWAPKLLNALQSLPQLSEVSSDWQDRGLAAWVNVDRDSASRLGISMADVDNALYNAFGQRLISTIYTQANQYRVVLEHNTANKPGLAALETIRLTGNDGGTIPLSAIASIKQRFTPLSINHLDQFPVTTFSFNVPEGYSLGDAVQAILNTERTLALPADITTQFQGSTLAFQAALGNTVWLIVAAVVAMYIVLGVLYESFIHPITILSTLPTAGVGALLALMIAGSELDIIAIIGIILLIGIVKKNAIMMIDFALAAEREQGMYPRDAIFQACLLRFRPILMTTLAALLGALPLMLSTGVGAELRRPLGIAMVGGLLVSQILTLFTTPVIYLLFDRLSLYVKSRFPRHKEEA.

The next 12 helical transmembrane spans lie at 25–45, 347–367, 369–389, 396–416, 440–460, 472–492, 537–557, 869–889, 890–910, 911–931, 968–988, and 998–1018; these read LLMA…PVAA, LMLA…NIPA, IIPG…MVFL, LTLM…IVVI, IGFT…PLLF, FAVT…TLTP, WLTL…WIVI, LIVA…ESFI, HPIT…LALM, IAGS…IGIV, ILMT…STGV, and IAMV…TPVI.

Belongs to the resistance-nodulation-cell division (RND) (TC 2.A.6) family. MdtB subfamily. As to quaternary structure, part of a tripartite efflux system composed of MdtA, MdtB and MdtC. MdtB forms a heteromultimer with MdtC.

The protein resides in the cell inner membrane. In Salmonella arizonae (strain ATCC BAA-731 / CDC346-86 / RSK2980), this protein is Multidrug resistance protein MdtB.